The following is a 120-amino-acid chain: Glycine cleavage system H protein (120 aa).

The region spanning Val17 to Lys99 is the Lipoyl-binding domain. Lys58 is modified (N6-lipoyllysine).

Belongs to the GcvH family. As to quaternary structure, the glycine cleavage system is composed of four proteins: P, T, L and H. Requires (R)-lipoate as cofactor.

In terms of biological role, the glycine cleavage system catalyzes the degradation of glycine. The H protein shuttles the methylamine group of glycine from the P protein to the T protein. This chain is Glycine cleavage system H protein, found in Sinorhizobium medicae (strain WSM419) (Ensifer medicae).